We begin with the raw amino-acid sequence, 1023 residues long: Vacuolar membrane protease (1023 aa).

At Met-1–Lys-80 the chain is on the cytoplasmic side. Positions Lys-17–Ser-48 are enriched in polar residues. The interval Lys-17–Gln-59 is disordered. Residues Thr-81 to Asp-101 form a helical membrane-spanning segment. Topologically, residues Ser-102–Ser-425 are vacuolar. Residues Asn-170 and Asn-200 are each glycosylated (N-linked (GlcNAc...) asparagine). Positions 214 and 226 each coordinate Zn(2+). Residue Glu-259 is the Proton acceptor of the active site. Positions 260, 285, and 357 each coordinate Zn(2+). Residues Ala-426 to Phe-446 traverse the membrane as a helical segment. The Cytoplasmic segment spans residues Arg-447–Lys-461. A helical transmembrane segment spans residues Tyr-462–Val-482. Over Pro-483–Ser-491 the chain is Vacuolar. A glycan (N-linked (GlcNAc...) asparagine) is linked at Asn-490. The helical transmembrane segment at Ser-492–Leu-512 threads the bilayer. Residues Asn-513–Glu-529 are Cytoplasmic-facing. A helical membrane pass occupies residues Lys-530–Val-550. The Vacuolar portion of the chain corresponds to Lys-551–Glu-564. A helical transmembrane segment spans residues Leu-565 to Trp-585. Residues Cys-586 to Ser-643 are Cytoplasmic-facing. Residues Leu-604 to Thr-613 are compositionally biased toward polar residues. The disordered stretch occupies residues Leu-604–Leu-626. The helical transmembrane segment at Phe-644–Phe-664 threads the bilayer. Residues Asn-665–Leu-687 are Vacuolar-facing. N-linked (GlcNAc...) asparagine glycosylation occurs at Asn-675. The helical transmembrane segment at Ile-688–Phe-708 threads the bilayer. Residues Lys-709–Arg-712 are Cytoplasmic-facing. A helical transmembrane segment spans residues Ile-713–Asp-733. Topologically, residues Ala-734–Val-1023 are vacuolar. N-linked (GlcNAc...) asparagine glycans are attached at residues Asn-815, Asn-858, and Asn-892.

The protein belongs to the peptidase M28 family. The cofactor is Zn(2+).

It localises to the vacuole membrane. May be involved in vacuolar sorting and osmoregulation. The polypeptide is Vacuolar membrane protease (Clavispora lusitaniae (strain ATCC 42720) (Yeast)).